The primary structure comprises 473 residues: Lactate utilization protein B (473 aa).

4Fe-4S ferredoxin-type domains follow at residues 303 to 333 (GTAFQPVLQCIRCAACINVCPVYRHVGGHSY) and 352 to 381 (YDDYQELPFASSLCAACTDACPVKIPLHEL). 7 residues coordinate [4Fe-4S] cluster: Cys-312, Cys-315, Cys-318, Cys-322, Cys-365, Cys-368, and Cys-372.

The protein belongs to the LutB/YkgF family.

In terms of biological role, is involved in L-lactate degradation and allows cells to grow with lactate as the sole carbon source. Has probably a role as an electron transporter during oxidation of L-lactate. The polypeptide is Lactate utilization protein B (Bacillus pumilus (strain SAFR-032)).